The primary structure comprises 907 residues: MFQNKEQTESILVWEKIVSIFSIPSQNEILNFKQKSPNNIDNNLKQLFNFVKLYKLESLVLDWYFESIKKYFKSTLSNEFWKFFNNVNLAELDSSTTSGRQLKFINHQFALSINLLHKVFSFFKSNLFLFYELLFKKESYNFNFLIKKLQDLLITNIMHTTNQQTKYFNTILFMFFERDFISFTKSFYHSKKQILKDEEENNNNSKDLEFNDQQQEEEEEEEENEEESKSYIIMEMSFEDSITDINIKEDSFMDLCKKLQDLNFIVISEEIFTQILFKKVFEYIETRCKGVFEKSFLKSILEWADQVIFKWLAMILLSSTTTTKINNYNDIINNNDDDNDDDDDDENKENSLKIFNQWKKRLEFSIYENYSQQRISELFDMIVQYPDSLPSLEDLSICFQKIPIEKTMITNLKRVLHNRLLHPGANTSDIITQYISTIHAMDIIDPSGMVMEKVGKPIREYLSQREDTIRCIISSFTEESNEIYQELCNYDPQDNGGDDDSNNSLLAFGNCDLYVDEGDNFSSIDDFKFWIPNKIDGSSTTISIGNAKANNNNKKKKKKDTISHLVNIYDGIDLFINEYRSMLSDRLLSVVDFDLDKEIKNIELLKLRFGDSVLFNCEIMIKDMVDSKRLNLQIKNSQGVNNNNNNNNNNNNELKEFETLILSQLFWPTLKGDEFKYPKSIEKKMQIYSKEYERIKTPRQLIWKQHLGLVDLDLEIGNNIQSFQVSPIHATLIMLFESDDGDDDDEKELTLEYLSKQLEISKDLVKKKLIFWLNNQIIKETSHETYKINNKEKEEQKQRQQQIENDDQDESSSDDDDDDNNIVVEEEEEEKSTSAKEKEEQMRVVESFIIGMLINFKTLPLERIHSMLTMFNSELYTSTIHELKAFLSKLVNEEKIELVGNDFKIKK.

Disordered stretches follow at residues 203-228 and 790-838; these read NNSK…EEES and NKEK…AKEK. Acidic residues-rich tracts occupy residues 214-226 and 804-830; these read QQEE…ENEE and ENDD…EEEE.

This sequence belongs to the cullin family. As to quaternary structure, the APC/C is composed of at least 13 subunits that stay tightly associated throughout the cell cycle: anapc1, anapc2, anapc3, anapc4, anapc5, anapc6, anapc7, anapc8, anapc10, anapc11, cdc20, cdc26 and cdh1.

It is found in the nucleus. It functions in the pathway protein modification; protein ubiquitination. In terms of biological role, component of the anaphase promoting complex/cyclosome (APC/C), a cell cycle-regulated E3 ubiquitin-protein ligase complex that controls progression through mitosis and the G1 phase of the cell cycle. The protein is Anaphase-promoting complex subunit 2 (anapc2) of Dictyostelium discoideum (Social amoeba).